Here is a 215-residue protein sequence, read N- to C-terminus: Cytochrome b6 (215 aa).

The helical transmembrane segment at 32 to 52 threads the bilayer; it reads IFYCLGGITLTCFLVQVATGF. Cys35 serves as a coordination point for heme c. Residues His86 and His100 each coordinate heme b. Transmembrane regions (helical) follow at residues 90 to 110, 116 to 136, and 186 to 206; these read ASMM…TGGF, LTWV…VTGY, and LHTF…FLMI. Heme b-binding residues include His187 and His202.

Belongs to the cytochrome b family. PetB subfamily. As to quaternary structure, the 4 large subunits of the cytochrome b6-f complex are cytochrome b6, subunit IV (17 kDa polypeptide, PetD), cytochrome f and the Rieske protein, while the 4 small subunits are PetG, PetL, PetM and PetN. The complex functions as a dimer. Requires heme b as cofactor. Heme c serves as cofactor.

It localises to the plastid. Its subcellular location is the chloroplast thylakoid membrane. In terms of biological role, component of the cytochrome b6-f complex, which mediates electron transfer between photosystem II (PSII) and photosystem I (PSI), cyclic electron flow around PSI, and state transitions. In Physcomitrium patens (Spreading-leaved earth moss), this protein is Cytochrome b6.